A 459-amino-acid polypeptide reads, in one-letter code: ADP-specific phosphofructokinase (459 aa).

Positions 1-457 (MMEFLKDFQK…FASYLSLLKR (457 aa)) constitute an ADPK domain. Residues E268, E298, and D441 each coordinate Mg(2+). Catalysis depends on D441, which acts as the Proton acceptor.

Belongs to the carbohydrate kinase PfkC family. Requires Mg(2+) as cofactor.

It is found in the cytoplasm. The enzyme catalyses beta-D-fructose 6-phosphate + ADP = beta-D-fructose 1,6-bisphosphate + AMP + H(+). It participates in carbohydrate degradation; glycolysis. Catalyzes the phosphorylation of fructose 6-phosphate to fructose 1,6-bisphosphate using ADP as the phosphate donor. The protein is ADP-specific phosphofructokinase of Thermococcus litoralis.